The chain runs to 480 residues: Lysosomal protective protein (480 aa).

A signal peptide spans 1 to 28 (MIRAAPPPLFLLLLLLLLLVSWASRGEA). Intrachain disulfides connect Cys88-Cys362, Cys240-Cys256, Cys241-Cys246, and Cys281-Cys331. Asn145 carries an N-linked (GlcNAc...) asparagine glycan. The active site involves Ser178. N-linked (GlcNAc...) asparagine glycosylation is present at Asn333. Residues Asp400 and His457 contribute to the active site.

It belongs to the peptidase S10 family. In terms of assembly, heterodimer of a 32 kDa chain and a 20 kDa chain; disulfide-linked.

Its subcellular location is the lysosome. It catalyses the reaction Release of a C-terminal amino acid with broad specificity.. Protective protein appears to be essential for both the activity of beta-galactosidase and neuraminidase, it associates with these enzymes and exerts a protective function necessary for their stability and activity. This protein is also a carboxypeptidase and can deamidate tachykinins. This is Lysosomal protective protein (CTSA) from Homo sapiens (Human).